A 229-amino-acid polypeptide reads, in one-letter code: Wtf element wtf14 (229 aa).

Residues 1-26 (MENNHHLAKDSLDELNPKRGKGEHET) are compositionally biased toward basic and acidic residues. The tract at residues 1-27 (MENNHHLAKDSLDELNPKRGKGEHETQ) is disordered. A run of 4 helical transmembrane segments spans residues 71–91 (IPAV…YLVF), 100–120 (VLFG…LLAT), 151–171 (LYAI…LMFF), and 188–208 (VIGV…PGLF).

Belongs to the WTF family.

The protein localises to the endoplasmic reticulum membrane. Its function is as follows. May act in meiotic drive. The sequence is that of Wtf element wtf14 from Schizosaccharomyces kambucha (Fission yeast).